Reading from the N-terminus, the 309-residue chain is MTVTVKMLVDKLKLKVVYGNEELLAKAITTADISRPGLEMAGYFDYYSPERLQLVGMKEWTYLKTMTANNRYSVFANIFREETPAVIVARGLEIPEEMLQAAKENGVAVLQGRNSTSSLSGDMSWYLNSQLAERTSVHGVLVDIYGMGVLIQGDSGIGKSETALELVKRGHRLVADDRVDVYAKDEGTLWGEPAEILLHLLEIRGVGIIDVMSLYGASAVRDSSQVQLCICLEHFENDEVFDRLGNSNEEIELQGVKIPRIRIPVKTGRNVSVVIEAAAMNYRAKQMGYDATKTFKDRLTDLISKNGED.

Active-site residues include His138 and Lys159. An ATP-binding site is contributed by 153-160 (GDSGIGKS). Ser160 contributes to the Mg(2+) binding site. Residue Asp177 is the Proton acceptor; for phosphorylation activity. Proton donor; for dephosphorylation activity of the active site. The interval 201–210 (LEIRGVGIID) is important for the catalytic mechanism of both phosphorylation and dephosphorylation. Mg(2+) is bound at residue Glu202. Residue Arg243 is part of the active site. An important for the catalytic mechanism of dephosphorylation region spans residues 264-269 (PVKTGR).

The protein belongs to the HPrK/P family. Homohexamer. It depends on Mg(2+) as a cofactor.

The catalysed reaction is [HPr protein]-L-serine + ATP = [HPr protein]-O-phospho-L-serine + ADP + H(+). The enzyme catalyses [HPr protein]-O-phospho-L-serine + phosphate + H(+) = [HPr protein]-L-serine + diphosphate. Functionally, catalyzes the ATP- as well as the pyrophosphate-dependent phosphorylation of a specific serine residue in HPr, a phosphocarrier protein of the phosphoenolpyruvate-dependent sugar phosphotransferase system (PTS). HprK/P also catalyzes the pyrophosphate-producing, inorganic phosphate-dependent dephosphorylation (phosphorolysis) of seryl-phosphorylated HPr (P-Ser-HPr). The two antagonistic activities of HprK/P are regulated by several intracellular metabolites, which change their concentration in response to the absence or presence of rapidly metabolisable carbon sources (glucose, fructose, etc.) in the growth medium. Therefore, by controlling the phosphorylation state of HPr, HPrK/P is a sensor enzyme that plays a major role in the regulation of carbon metabolism and sugar transport: it mediates carbon catabolite repression (CCR), and regulates PTS-catalyzed carbohydrate uptake and inducer exclusion. The protein is HPr kinase/phosphorylase of Streptococcus thermophilus (strain CNRZ 1066).